The primary structure comprises 94 residues: Small ribosomal subunit protein uS19 (94 aa).

The tract at residues 73–94 is disordered; sequence EFAPTRTYRGHGKDAERTTRRR. The segment covering 83–94 has biased composition (basic and acidic residues); that stretch reads HGKDAERTTRRR.

The protein belongs to the universal ribosomal protein uS19 family.

In terms of biological role, protein S19 forms a complex with S13 that binds strongly to the 16S ribosomal RNA. In Thermomicrobium roseum (strain ATCC 27502 / DSM 5159 / P-2), this protein is Small ribosomal subunit protein uS19.